The sequence spans 1896 residues: Plexin-A1 (1896 aa).

The N-terminal stretch at 1-26 (MPLPPRSLQVLLLLLLLLLLLPGMWA) is a signal peptide. Residues 27 to 512 (EAGLPRAGGG…TEKQVTRVPV (486 aa)) enclose the Sema domain. Residues 27–1244 (EAGLPRAGGG…VYSDSLLTLP (1218 aa)) lie on the Extracellular side of the membrane. An N-linked (GlcNAc...) asparagine glycan is attached at Asn-77. 10 cysteine pairs are disulfide-bonded: Cys-95/Cys-104, Cys-130/Cys-138, Cys-286/Cys-407, Cys-302/Cys-358, Cys-376/Cys-395, Cys-515/Cys-532, Cys-521/Cys-563, Cys-524/Cys-541, Cys-535/Cys-547, and Cys-598/Cys-617. N-linked (GlcNAc...) asparagine glycans are attached at residues Asn-660, Asn-672, and Asn-701. 4 IPT/TIG domains span residues 864-959 (PKIL…FTFV), 961-1045 (PTFY…YNYT), 1048-1147 (PTIL…FLYY), and 1150-1236 (PVLE…LQVY). A glycan (N-linked (GlcNAc...) asparagine) is linked at Asn-1043. N-linked (GlcNAc...) asparagine glycosylation is found at Asn-1187 and Asn-1212. A helical transmembrane segment spans residues 1245 to 1265 (AIVGIGGGGGLLLLVIVAVLI). Residues 1264–1317 (LIAYKRKSRDADRTLKRLQLQMDNLESRVALECKEAFAELQTDIHELTNDLDGA) are a coiled coil. Over 1266–1896 (AYKRKSRDAD…QVVDTMALSS (631 aa)) the chain is Cytoplasmic.

It belongs to the plexin family. As to quaternary structure, interacts directly with NRP1 and NRP2. Interacts with PLXN1B. Interacts with FARP2, RND1 and KDR/VEGFR2. Binding of SEMA3A leads to dissociation of FARP2. Interacts with CRMP1, DPYSL2/CRMP2, DPYSL3/CRMP3 and DPYSL4/CRMP4. Interacts (via TIG domains) with TREM2; the interaction mediates SEMA6D binding and signaling through TYROBP. Detected in fetal brain, lung, liver and kidney.

Its subcellular location is the cell membrane. Functionally, coreceptor for SEMA3A, SEMA3C, SEMA3F and SEMA6D. Necessary for signaling by class 3 semaphorins and subsequent remodeling of the cytoskeleton. Plays a role in axon guidance, invasive growth and cell migration. Class 3 semaphorins bind to a complex composed of a neuropilin and a plexin. The plexin modulates the affinity of the complex for specific semaphorins, and its cytoplasmic domain is required for the activation of down-stream signaling events in the cytoplasm. Acts as coreceptor of TREM2 for SEMA6D in dendritic cells and is involved in the generation of immune responses and skeletal homeostasis. The polypeptide is Plexin-A1 (Homo sapiens (Human)).